Reading from the N-terminus, the 318-residue chain is Glycine--tRNA ligase alpha subunit (318 aa).

The protein belongs to the class-II aminoacyl-tRNA synthetase family. In terms of assembly, tetramer of two alpha and two beta subunits.

It is found in the cytoplasm. It catalyses the reaction tRNA(Gly) + glycine + ATP = glycyl-tRNA(Gly) + AMP + diphosphate. This is Glycine--tRNA ligase alpha subunit from Chelativorans sp. (strain BNC1).